A 764-amino-acid polypeptide reads, in one-letter code: E3 ubiquitin-protein ligase CBL-B-B (764 aa).

Over residues Met-1–Ser-19 the composition is skewed to low complexity. A disordered region spans residues Met-1 to Ser-27. The 4H stretch occupies residues Pro-48 to Gln-180. Positions Pro-48–Asp-356 constitute a Cbl-PTB domain. The EF-hand-like stretch occupies residues Gly-181–Phe-253. Ca(2+) contacts are provided by Asp-234, Thr-236, Asn-238, Tyr-240, and Glu-245. An SH2-like region spans residues Gln-254–Asp-356. Arg-299 is a binding site for 4-O-phospho-L-tyrosine. Residues Leu-357 to Leu-385 are linker. The segment at Cys-386–Arg-425 adopts an RING-type zinc-finger fold. 2 disordered regions span residues Met-482–Cys-583 and Lys-707–Pro-726. Residues Arg-485–Leu-498 show a composition bias toward polar residues. The segment covering Leu-556 to Pro-578 has biased composition (pro residues).

Interacts with several SH3 domain-containing proteins and with poly-ubiquitinated proteins.

The protein resides in the cytoplasm. It catalyses the reaction S-ubiquitinyl-[E2 ubiquitin-conjugating enzyme]-L-cysteine + [acceptor protein]-L-lysine = [E2 ubiquitin-conjugating enzyme]-L-cysteine + N(6)-ubiquitinyl-[acceptor protein]-L-lysine.. It functions in the pathway protein modification; protein ubiquitination. Functionally, E3 ubiquitin-protein ligase which accepts ubiquitin from specific E2 ubiquitin-conjugating enzymes, and transfers it to substrates, generally promoting their degradation by the proteasome. In Xenopus laevis (African clawed frog), this protein is E3 ubiquitin-protein ligase CBL-B-B (cblb-b).